The chain runs to 1003 residues: Phosphoenolpyruvate carboxylase (1003 aa).

A disordered region spans residues 1–24; that stretch reads MIMTVSDPGGSSMSSSSAITPESE. Catalysis depends on residues H190 and K646.

It belongs to the PEPCase type 1 family. Requires Mg(2+) as cofactor.

The catalysed reaction is oxaloacetate + phosphate = phosphoenolpyruvate + hydrogencarbonate. Functionally, forms oxaloacetate, a four-carbon dicarboxylic acid source for the tricarboxylic acid cycle. The sequence is that of Phosphoenolpyruvate carboxylase from Synechococcus sp. (strain WH7803).